We begin with the raw amino-acid sequence, 186 residues long: Napin embryo-specific (186 aa).

The first 21 residues, 1–21 (MANKLFLVSATLALFFLLTNA), serve as a signal peptide directing secretion. 2 propeptides span residues 22–38 (SVYRTVVEVDEDDATNP) and 77–97 (PSWTLDGEFDFEDDVENQQQG).

It belongs to the 2S seed storage albumins family. In terms of assembly, the mature protein consists of a small and a large chain linked by disulfide bonds. Cotyledons and the axis.

In terms of biological role, the small, basic, water-soluble napins are one of the two major kinds of storage proteins synthesized in the seed during its maturation. The sequence is that of Napin embryo-specific from Brassica napus (Rape).